Reading from the N-terminus, the 570-residue chain is Sulfite reductase [NADPH] hemoprotein beta-component (570 aa).

[4Fe-4S] cluster is bound by residues Cys-434, Cys-440, Cys-479, and Cys-483. Siroheme is bound at residue Cys-483.

It belongs to the nitrite and sulfite reductase 4Fe-4S domain family. Alpha(8)-beta(8). The alpha component is a flavoprotein, the beta component is a hemoprotein. Siroheme is required as a cofactor. Requires [4Fe-4S] cluster as cofactor.

It carries out the reaction hydrogen sulfide + 3 NADP(+) + 3 H2O = sulfite + 3 NADPH + 4 H(+). It functions in the pathway sulfur metabolism; hydrogen sulfide biosynthesis; hydrogen sulfide from sulfite (NADPH route): step 1/1. Functionally, component of the sulfite reductase complex that catalyzes the 6-electron reduction of sulfite to sulfide. This is one of several activities required for the biosynthesis of L-cysteine from sulfate. The polypeptide is Sulfite reductase [NADPH] hemoprotein beta-component (Escherichia coli O1:K1 / APEC).